A 310-amino-acid polypeptide reads, in one-letter code: 2-dehydro-3-deoxygluconokinase (310 aa).

Residues 29–33 (GDTLN), Tyr-89, 103–105 (YWR), and Arg-171 each bind substrate. Residues 169–171 (NYR), 229–234 (KRGADA), and 262–265 (AAGD) each bind ATP. Asp-265 serves as a coordination point for substrate. Asp-265 (proton acceptor) is an active-site residue.

It belongs to the carbohydrate kinase PfkB family.

It catalyses the reaction 2-dehydro-3-deoxy-D-gluconate + ATP = 2-dehydro-3-deoxy-6-phospho-D-gluconate + ADP + H(+). It participates in carbohydrate acid metabolism; 2-dehydro-3-deoxy-D-gluconate degradation; D-glyceraldehyde 3-phosphate and pyruvate from 2-dehydro-3-deoxy-D-gluconate: step 1/2. Its function is as follows. Catalyzes the phosphorylation of 2-keto-3-deoxygluconate (KDG) to produce 2-keto-3-deoxy-6-phosphogluconate (KDPG). The protein is 2-dehydro-3-deoxygluconokinase of Dickeya dadantii (strain 3937) (Erwinia chrysanthemi (strain 3937)).